A 120-amino-acid polypeptide reads, in one-letter code: Chaperonin GroEL (120 aa).

Residue 23–27 (DGTTT) coordinates ATP.

It belongs to the chaperonin (HSP60) family. Forms a cylinder of 14 subunits composed of two heptameric rings stacked back-to-back. Interacts with the co-chaperonin GroES.

The protein resides in the cytoplasm. It catalyses the reaction ATP + H2O + a folded polypeptide = ADP + phosphate + an unfolded polypeptide.. In terms of biological role, together with its co-chaperonin GroES, plays an essential role in assisting protein folding. The GroEL-GroES system forms a nano-cage that allows encapsulation of the non-native substrate proteins and provides a physical environment optimized to promote and accelerate protein folding. In Mycolicibacterium rhodesiae (Mycobacterium rhodesiae), this protein is Chaperonin GroEL.